We begin with the raw amino-acid sequence, 348 residues long: Dihydroorotase (348 aa).

Zn(2+) is bound by residues His14 and His16. Substrate contacts are provided by residues 16–18 and Asn42; that span reads HLR. Lys100, His137, and His175 together coordinate Zn(2+). Lys100 bears the N6-carboxylysine mark. His137 provides a ligand contact to substrate. Leu220 is a substrate binding site. Position 248 (Asp248) interacts with Zn(2+). Residue Asp248 is part of the active site. 2 residues coordinate substrate: His252 and Ala264.

The protein belongs to the metallo-dependent hydrolases superfamily. DHOase family. Class II DHOase subfamily. Homodimer. Requires Zn(2+) as cofactor.

The enzyme catalyses (S)-dihydroorotate + H2O = N-carbamoyl-L-aspartate + H(+). It functions in the pathway pyrimidine metabolism; UMP biosynthesis via de novo pathway; (S)-dihydroorotate from bicarbonate: step 3/3. Its function is as follows. Catalyzes the reversible cyclization of carbamoyl aspartate to dihydroorotate. The sequence is that of Dihydroorotase from Pseudomonas putida (strain ATCC 700007 / DSM 6899 / JCM 31910 / BCRC 17059 / LMG 24140 / F1).